A 195-amino-acid chain; its full sequence is MNINPNNVEIIISAVKPDQYPDTGLKEVALAGRSNVGKSSFINTMIGRKSMARISSKPGKTQTLNFFNIDEQLVFVDVPGYGYAKVSKTERERWGKMIETYITTRDNLACVIQLVDIRHNPTEDDRLMYDFLKHYEIPTIVIATKEDKIPKGKIQKHLKIIKQDLDMDSSDTLISYTALSKDKNPMIFNAIEKYL.

The 172-residue stretch at 24 to 195 folds into the EngB-type G domain; it reads GLKEVALAGR…MIFNAIEKYL (172 aa). GTP contacts are provided by residues 32-39, 59-63, 77-80, 144-147, and 176-178; these read GRSNVGKS, GKTQT, DVPG, TKED, and YTA. Serine 39 and threonine 61 together coordinate Mg(2+).

Belongs to the TRAFAC class TrmE-Era-EngA-EngB-Septin-like GTPase superfamily. EngB GTPase family. Mg(2+) is required as a cofactor.

Functionally, necessary for normal cell division and for the maintenance of normal septation. The sequence is that of Probable GTP-binding protein EngB from Macrococcus caseolyticus (strain JCSC5402) (Macrococcoides caseolyticum).